Here is a 163-residue protein sequence, read N- to C-terminus: Norbelladine synthase (163 aa).

68-71 (YHKE) is a tyramine binding site. Lys83 serves as the catalytic Proton donor.

Belongs to the BetVI family. As to expression, mostly expressed in bulbs, and, to a lower extent, in roots, stems, leaves and flowers.

It catalyses the reaction 3,4-dihydroxybenzaldehyde + tyramine + AH2 = norbelladine + A + H2O. The protein operates within alkaloid biosynthesis. Its function is as follows. Catalyzes the condensation of tyramine and 3,4-dihydroxybenzaldehyde (3,4-DHBA) to form norbelladine, the common precursor to all Amaryllidaceae alkaloids such as galanthamine, lycorine and haemanthamine, and including haemanthamine- and crinamine-type alkaloids, promising anticancer agents. The protein is Norbelladine synthase of Narcissus pseudonarcissus (Daffodil).